The chain runs to 464 residues: NADH-quinone oxidoreductase subunit N 2 (464 aa).

The next 14 helical transmembrane spans lie at 12–32, 33–53, 62–82, 93–113, 117–137, 152–172, 189–209, 227–247, 254–274, 282–304, 310–330, 351–371, 400–420, and 434–454; these read VGII…LIGF, LGFL…LAGY, INAF…FVIF, TFVE…IMVS, LAVI…SVGM, LVLG…YIGA, FALA…AAPF, FIST…ASYI, FSYI…LVAY, MLAY…YNPL, IFYV…LSIL, PFLA…PPFA, IIAA…EPAT, and IGIS…NILF.

This sequence belongs to the complex I subunit 2 family. NDH-1 is composed of 14 different subunits. Subunits NuoA, H, J, K, L, M, N constitute the membrane sector of the complex.

Its subcellular location is the cell inner membrane. The enzyme catalyses a quinone + NADH + 5 H(+)(in) = a quinol + NAD(+) + 4 H(+)(out). NDH-1 shuttles electrons from NADH, via FMN and iron-sulfur (Fe-S) centers, to quinones in the respiratory chain. The immediate electron acceptor for the enzyme in this species is believed to be ubiquinone. Couples the redox reaction to proton translocation (for every two electrons transferred, four hydrogen ions are translocated across the cytoplasmic membrane), and thus conserves the redox energy in a proton gradient. The chain is NADH-quinone oxidoreductase subunit N 2 from Hydrogenobaculum sp. (strain Y04AAS1).